The following is a 252-amino-acid chain: 5-oxoprolinase subunit A (252 aa).

The protein belongs to the LamB/PxpA family. As to quaternary structure, forms a complex composed of PxpA, PxpB and PxpC.

The catalysed reaction is 5-oxo-L-proline + ATP + 2 H2O = L-glutamate + ADP + phosphate + H(+). Its function is as follows. Catalyzes the cleavage of 5-oxoproline to form L-glutamate coupled to the hydrolysis of ATP to ADP and inorganic phosphate. The sequence is that of 5-oxoprolinase subunit A from Staphylococcus epidermidis (strain ATCC 35984 / DSM 28319 / BCRC 17069 / CCUG 31568 / BM 3577 / RP62A).